Reading from the N-terminus, the 82-residue chain is Putative membrane protein insertion efficiency factor (82 aa).

This sequence belongs to the UPF0161 family.

Its subcellular location is the cell inner membrane. Its function is as follows. Could be involved in insertion of integral membrane proteins into the membrane. The sequence is that of Putative membrane protein insertion efficiency factor from Synechococcus elongatus (strain ATCC 33912 / PCC 7942 / FACHB-805) (Anacystis nidulans R2).